Here is a 124-residue protein sequence, read N- to C-terminus: Protein MGF 110-4L-B (124 aa).

The N-terminal stretch at 1-18 (MLVIFLGILGLLANQVLG) is a signal peptide. Asn-64 carries an N-linked (GlcNAc...) asparagine; by host glycan. The short motif at 121 to 124 (KEDL) is the Prevents secretion from ER element.

Belongs to the asfivirus MGF 110 family.

It localises to the virion. The protein resides in the host endoplasmic reticulum-Golgi intermediate compartment. Causes the redistribution of lumenal ER protein to an enlarged ERGIC compartment. This is Protein MGF 110-4L-B from African swine fever virus (isolate Portugal/Lis 57/1957) (ASFV).